The sequence spans 340 residues: Holliday junction branch migration complex subunit RuvB (340 aa).

The segment at methionine 1–tyrosine 183 is large ATPase domain (RuvB-L). ATP contacts are provided by residues leucine 22, arginine 23, glycine 64, lysine 67, threonine 68, threonine 69, glutamate 130–phenylalanine 132, arginine 173, tyrosine 183, and arginine 220. Threonine 68 lines the Mg(2+) pocket. The segment at alanine 184 to glutamate 254 is small ATPAse domain (RuvB-S). Positions aspartate 257 to phenylalanine 340 are head domain (RuvB-H). Residues lysine 312 and arginine 317 each coordinate DNA.

Belongs to the RuvB family. Homohexamer. Forms an RuvA(8)-RuvB(12)-Holliday junction (HJ) complex. HJ DNA is sandwiched between 2 RuvA tetramers; dsDNA enters through RuvA and exits via RuvB. An RuvB hexamer assembles on each DNA strand where it exits the tetramer. Each RuvB hexamer is contacted by two RuvA subunits (via domain III) on 2 adjacent RuvB subunits; this complex drives branch migration. In the full resolvosome a probable DNA-RuvA(4)-RuvB(12)-RuvC(2) complex forms which resolves the HJ.

The protein resides in the cytoplasm. The enzyme catalyses ATP + H2O = ADP + phosphate + H(+). The RuvA-RuvB-RuvC complex processes Holliday junction (HJ) DNA during genetic recombination and DNA repair, while the RuvA-RuvB complex plays an important role in the rescue of blocked DNA replication forks via replication fork reversal (RFR). RuvA specifically binds to HJ cruciform DNA, conferring on it an open structure. The RuvB hexamer acts as an ATP-dependent pump, pulling dsDNA into and through the RuvAB complex. RuvB forms 2 homohexamers on either side of HJ DNA bound by 1 or 2 RuvA tetramers; 4 subunits per hexamer contact DNA at a time. Coordinated motions by a converter formed by DNA-disengaged RuvB subunits stimulates ATP hydrolysis and nucleotide exchange. Immobilization of the converter enables RuvB to convert the ATP-contained energy into a lever motion, pulling 2 nucleotides of DNA out of the RuvA tetramer per ATP hydrolyzed, thus driving DNA branch migration. The RuvB motors rotate together with the DNA substrate, which together with the progressing nucleotide cycle form the mechanistic basis for DNA recombination by continuous HJ branch migration. Branch migration allows RuvC to scan DNA until it finds its consensus sequence, where it cleaves and resolves cruciform DNA. The polypeptide is Holliday junction branch migration complex subunit RuvB (Syntrophus aciditrophicus (strain SB)).